The primary structure comprises 176 residues: Probable DNA-directed RNA polymerase subunit delta (176 aa).

Residues 14–81 (CSMIEVVHSV…GENRWGLRSW (68 aa)) form the HTH HARE-type domain. Positions 91–176 (ILPQPKPKKK…ETEEEEEEEL (86 aa)) are disordered. The span at 106-176 (DGFDDYIEED…ETEEEEEEEL (71 aa)) shows a compositional bias: acidic residues.

Belongs to the RpoE family. RNAP is composed of a core of 2 alpha, a beta and a beta' subunits. The core is associated with a delta subunit and one of several sigma factors.

Its function is as follows. Participates in both the initiation and recycling phases of transcription. In the presence of the delta subunit, RNAP displays an increased specificity of transcription, a decreased affinity for nucleic acids, and an increased efficiency of RNA synthesis because of enhanced recycling. The polypeptide is Probable DNA-directed RNA polymerase subunit delta (Bacillus thuringiensis (strain Al Hakam)).